The sequence spans 916 residues: Protein translocase subunit SecA (916 aa).

Residues glutamine 87, 105–109, and aspartate 507 contribute to the ATP site; that span reads GEGKT. Positions 900, 902, 911, and 912 each coordinate Zn(2+).

Belongs to the SecA family. In terms of assembly, monomer and homodimer. Part of the essential Sec protein translocation apparatus which comprises SecA, SecYEG and auxiliary proteins SecDF-YajC and YidC. Requires Zn(2+) as cofactor.

The protein localises to the cell inner membrane. It is found in the cytoplasm. The catalysed reaction is ATP + H2O + cellular proteinSide 1 = ADP + phosphate + cellular proteinSide 2.. Its function is as follows. Part of the Sec protein translocase complex. Interacts with the SecYEG preprotein conducting channel. Has a central role in coupling the hydrolysis of ATP to the transfer of proteins into and across the cell membrane, serving both as a receptor for the preprotein-SecB complex and as an ATP-driven molecular motor driving the stepwise translocation of polypeptide chains across the membrane. The chain is Protein translocase subunit SecA from Neisseria meningitidis serogroup C / serotype 2a (strain ATCC 700532 / DSM 15464 / FAM18).